Here is a 248-residue protein sequence, read N- to C-terminus: 3-deoxy-manno-octulosonate cytidylyltransferase (248 aa).

It belongs to the KdsB family.

Its subcellular location is the cytoplasm. The enzyme catalyses 3-deoxy-alpha-D-manno-oct-2-ulosonate + CTP = CMP-3-deoxy-beta-D-manno-octulosonate + diphosphate. It functions in the pathway nucleotide-sugar biosynthesis; CMP-3-deoxy-D-manno-octulosonate biosynthesis; CMP-3-deoxy-D-manno-octulosonate from 3-deoxy-D-manno-octulosonate and CTP: step 1/1. The protein operates within bacterial outer membrane biogenesis; lipopolysaccharide biosynthesis. Its function is as follows. Activates KDO (a required 8-carbon sugar) for incorporation into bacterial lipopolysaccharide in Gram-negative bacteria. This is 3-deoxy-manno-octulosonate cytidylyltransferase from Erwinia tasmaniensis (strain DSM 17950 / CFBP 7177 / CIP 109463 / NCPPB 4357 / Et1/99).